The chain runs to 86 residues: U15-lycotoxin-Ls1a (86 aa).

The N-terminal stretch at 1-20 (MNSKIFAVLFLLAFLSCVLS) is a signal peptide. A WAP domain is found at 21–66 (DQYCPKSSITACKKMNIRNDCCKDDDCTGGSWCCATPCGNFCKYPT). 5 cysteine pairs are disulfide-bonded: Cys24/Cys54, Cys32/Cys58, Cys41/Cys53, Cys42/Cys80, and Cys47/Cys62.

The protein belongs to the venom protein 11 family. 01 (wap-1) subfamily. In terms of processing, contains 5 disulfide bonds. Expressed by the venom gland.

Its subcellular location is the secreted. In terms of biological role, has antibacterial activity. This is U15-lycotoxin-Ls1a from Lycosa singoriensis (Wolf spider).